We begin with the raw amino-acid sequence, 339 residues long: MTIQKNWQELIRPNKLQVTPGSDPSRFATLVAEPLERGFGQTLGNALRRVLLSSLQGAAVQSVHIDGVLHEFSSIAGVREDVTDIVLNIKDISIKMQGEGPKRMVIKKQGPGVVTAGDIQTVGDVVVLNPELQLCTLDDGAEIRMEFTVDTGKGYVAADRNRPEDAPIGLIPVDSLFSPVRKVSYKVENTREGQILDYDKLTLTIETNGAITPEDALAYSARILQDQLNVFVNFEEPRKEVVQEIIPDLAFNPAFLKKVDELELSVRSANCLKNDNIVYIGDLVQKSEAEMLRTPNFGRKSLNEIKEVLAQMGLHLGMEVPGWPPENIDELAKRFEDHY.

The alpha N-terminal domain (alpha-NTD) stretch occupies residues 1 to 235; sequence MTIQKNWQEL…DQLNVFVNFE (235 aa). The segment at 251 to 339 is alpha C-terminal domain (alpha-CTD); sequence FNPAFLKKVD…ELAKRFEDHY (89 aa).

This sequence belongs to the RNA polymerase alpha chain family. In terms of assembly, homodimer. The RNAP catalytic core consists of 2 alpha, 1 beta, 1 beta' and 1 omega subunit. When a sigma factor is associated with the core the holoenzyme is formed, which can initiate transcription.

The enzyme catalyses RNA(n) + a ribonucleoside 5'-triphosphate = RNA(n+1) + diphosphate. Its function is as follows. DNA-dependent RNA polymerase catalyzes the transcription of DNA into RNA using the four ribonucleoside triphosphates as substrates. This chain is DNA-directed RNA polymerase subunit alpha, found in Afipia carboxidovorans (strain ATCC 49405 / DSM 1227 / KCTC 32145 / OM5) (Oligotropha carboxidovorans).